Reading from the N-terminus, the 150-residue chain is Small ribosomal subunit protein uS11 (150 aa).

The disordered stretch occupies residues 130–150; the sequence is DVTPIPSDSTRRKSGRRGRRL. Over residues 141–150 the composition is skewed to basic residues; that stretch reads RKSGRRGRRL.

Belongs to the universal ribosomal protein uS11 family.

This Lupinus luteus (European yellow lupine) protein is Small ribosomal subunit protein uS11 (RPS14).